The following is a 110-amino-acid chain: T cell receptor alpha variable 35 (110 aa).

The first 19 residues, 1 to 19, serve as a signal peptide directing secretion; sequence MLLEHLLIILWMQLTWVSG. The Ig-like domain occupies 20-110; that stretch reads QQLNQSPQSM…DVGIYFCAGQ (91 aa). N-linked (GlcNAc...) asparagine glycosylation is found at Asn-40 and Asn-93. An intrachain disulfide couples Cys-41 to Cys-107.

As to quaternary structure, alpha-beta TR is a heterodimer composed of an alpha and beta chain; disulfide-linked. The alpha-beta TR is associated with the transmembrane signaling CD3 coreceptor proteins to form the TR-CD3 (TcR or TCR). The assembly of alpha-beta TR heterodimers with CD3 occurs in the endoplasmic reticulum where a single alpha-beta TR heterodimer associates with one CD3D-CD3E heterodimer, one CD3G-CD3E heterodimer and one CD247 homodimer forming a stable octameric structure. CD3D-CD3E and CD3G-CD3E heterodimers preferentially associate with TR alpha and TR beta chains, respectively. The association of the CD247 homodimer is the last step of TcR assembly in the endoplasmic reticulum and is required for transport to the cell surface.

Its subcellular location is the cell membrane. Its function is as follows. V region of the variable domain of T cell receptor (TR) alpha chain that participates in the antigen recognition. Alpha-beta T cell receptors are antigen specific receptors which are essential to the immune response and are present on the cell surface of T lymphocytes. Recognize peptide-major histocompatibility (MH) (pMH) complexes that are displayed by antigen presenting cells (APC), a prerequisite for efficient T cell adaptive immunity against pathogens. Binding of alpha-beta TR to pMH complex initiates TR-CD3 clustering on the cell surface and intracellular activation of LCK that phosphorylates the ITAM motifs of CD3G, CD3D, CD3E and CD247 enabling the recruitment of ZAP70. In turn ZAP70 phosphorylates LAT, which recruits numerous signaling molecules to form the LAT signalosome. The LAT signalosome propagates signal branching to three major signaling pathways, the calcium, the mitogen-activated protein kinase (MAPK) kinase and the nuclear factor NF-kappa-B (NF-kB) pathways, leading to the mobilization of transcription factors that are critical for gene expression and essential for T cell growth and differentiation. The T cell repertoire is generated in the thymus, by V-(D)-J rearrangement. This repertoire is then shaped by intrathymic selection events to generate a peripheral T cell pool of self-MH restricted, non-autoaggressive T cells. Post-thymic interaction of alpha-beta TR with the pMH complexes shapes TR structural and functional avidity. The polypeptide is T cell receptor alpha variable 35 (Homo sapiens (Human)).